The following is a 1364-amino-acid chain: DNA-directed RNA polymerase subunit beta' (1364 aa).

Residues Cys250, Cys317, Cys324, and Cys327 each coordinate Zn(2+). Positions 1318–1342 (TRHNIDPSASTNAAFTRPDVDNELK) are disordered.

The protein belongs to the RNA polymerase beta' chain family. RpoC2 subfamily. In cyanobacteria the RNAP catalytic core is composed of 2 alpha, 1 beta, 1 beta', 1 gamma and 1 omega subunit. When a sigma factor is associated with the core the holoenzyme is formed, which can initiate transcription. Zn(2+) is required as a cofactor.

The catalysed reaction is RNA(n) + a ribonucleoside 5'-triphosphate = RNA(n+1) + diphosphate. In terms of biological role, DNA-dependent RNA polymerase catalyzes the transcription of DNA into RNA using the four ribonucleoside triphosphates as substrates. The polypeptide is DNA-directed RNA polymerase subunit beta' (Synechococcus sp. (strain CC9902)).